The sequence spans 490 residues: Cyclin-T1-3 (490 aa).

Disordered regions lie at residues 275-391 and 414-490; these read RVAP…GDVA and AAED…RLRS. Composition is skewed to polar residues over residues 282–298 and 352–365; these read QGND…NQRA and TANS…SSTM. Basic and acidic residues-rich tracts occupy residues 367–391 and 457–490; these read AMKK…GDVA and QEYR…RLRS.

Belongs to the cyclin family. Cyclin T subfamily.

In Oryza sativa subsp. japonica (Rice), this protein is Cyclin-T1-3 (CYCT1-3).